The chain runs to 329 residues: MPEGPSVRKFHHLVSPFVGQQVVKTGGSSKKLNPTSFQSLWLQDSQVHGKKLFLRFDPDEEAVSLGNSLLSEPLREGEQKDKARHHQEASDPSSWSPGGDSAVPSGDDGLQCLGGDTPAGGAERWLQVSFGLFGSIRVNEFSRAKKANKRGDWRDPVPRLVLHFSGSGFLAFYNCQMTWRFSSPVVSPASDILSEKFHRGQALEALGREQPICYTLLDQRYFSGLGNIIKNEALFRAGIHPLSPGSLLGLPRLEALVDHVVAFSADWLQGKFQGTRQHTQIYQKEQCPAGHQVVRESLGPPGGFQRLTWWCPQCQPRLSADEPKQLQPS.

Pro2 functions as the Schiff-base intermediate with DNA in the catalytic mechanism. The active-site Proton donor is Glu3. The active-site Proton donor; for beta-elimination activity is the Lys50. Lys50 carries the post-translational modification N6-acetyllysine. Ser68 is modified (phosphoserine). The segment at 68-116 (SLLSEPLREGEQKDKARHHQEASDPSSWSPGGDSAVPSGDDGLQCLGGD) is disordered. Residues 73–89 (PLREGEQKDKARHHQEA) show a composition bias toward basic and acidic residues. Residues 90–102 (SDPSSWSPGGDSA) are compositionally biased toward low complexity. Lys149 bears the N6-acetyllysine mark. Asn227 provides a ligand contact to DNA. An FPG-type zinc finger spans residues 280-316 (QIYQKEQCPAGHQVVRESLGPPGGFQRLTWWCPQCQP). Arg306 functions as the Proton donor; for delta-elimination activity in the catalytic mechanism.

This sequence belongs to the FPG family. Binds EP300.

Its subcellular location is the nucleus. The enzyme catalyses 2'-deoxyribonucleotide-(2'-deoxyribose 5'-phosphate)-2'-deoxyribonucleotide-DNA = a 3'-end 2'-deoxyribonucleotide-(2,3-dehydro-2,3-deoxyribose 5'-phosphate)-DNA + a 5'-end 5'-phospho-2'-deoxyribonucleoside-DNA + H(+). Acetylation of Lys-50 leads to loss of DNA nicking activity. Its function is as follows. Involved in base excision repair of DNA damaged by oxidation or by mutagenic agents. Has DNA glycosylase activity towards 5-hydroxyuracil and other oxidized derivatives of cytosine with a preference for mismatched double-stranded DNA (DNA bubbles). Has low or no DNA glycosylase activity towards thymine glycol, 2-hydroxyadenine, hypoxanthine and 8-oxoguanine. Has AP (apurinic/apyrimidinic) lyase activity and introduces nicks in the DNA strand. Cleaves the DNA backbone by beta-delta elimination to generate a single-strand break at the site of the removed base with both 3'- and 5'-phosphates. This chain is Endonuclease 8-like 2 (NEIL2), found in Bos taurus (Bovine).